The following is a 132-amino-acid chain: Large-conductance mechanosensitive channel (132 aa).

3 helical membrane passes run 14–34 (VIDL…VSSL), 38–58 (IITP…LKIT), and 69–89 (FIQT…FVKV).

Belongs to the MscL family. As to quaternary structure, homopentamer.

Its subcellular location is the cell membrane. Its function is as follows. Channel that opens in response to stretch forces in the membrane lipid bilayer. May participate in the regulation of osmotic pressure changes within the cell. This is Large-conductance mechanosensitive channel from Bacillus thuringiensis (strain Al Hakam).